Here is a 384-residue protein sequence, read N- to C-terminus: Brix domain-containing protein F44G4.1 (384 aa).

2 disordered regions span residues 1–58 (MAPK…KVVK) and 82–135 (SKAT…PQKE). Over residues 18–48 (FVEEEVTGDVDEDGFEQAEDMPDEVDSDEDE) the composition is skewed to acidic residues. Residues 96–114 (LPKSQRGKALKRALRKDKR) show a composition bias toward basic residues. The span at 115–127 (ARQGERAQIRDEL) shows a compositional bias: basic and acidic residues. One can recognise a Brix domain in the interval 177–360 (PKVMITMTPK…LKWLQKGTFD (184 aa)).

This is Brix domain-containing protein F44G4.1 from Caenorhabditis elegans.